The chain runs to 505 residues: MEEFQGYIEREGSWQHNFLYPLIFQEYLFRFAYGHGLNQSILLETSGNRKYSLLIVKRLITRMDQQNHLIPSANDSNQNDFWGHKHNFYSQMISEGFSGIVEIPFYRLLIASLEKQKKVKSHNFRSIHSIFPFLEDKFLPLNSVLDILLPYPAHLEILVQILRDWVRDASSLHLLRFFLYEDHNNNCNSLFTPKNSISFFFFRNQRFFVFLYNFHVCEYESIFFFLCNQSSHLRSTSYRALLERTFFYGKLDYLVNLFTKDFAVILWLFKDPSPHSVRYKGKFILASKGTFFLMHKWKFYLIHFWQCHFSVWSHPRRIYLNRLSTHCLDFIGFLSSVQLTSSVVRSQMLENAFLIDNTIKRFDPKIPISTLFGSLAKAQFCNRLGHPISKSVWIDLSDSDIIDRFGRICRNLSHYYSGSSRKKSLYRLKYILQISCARTLARKHKSAARAFLKRLGSEFLEEFFTEHEKVLSLILPKNGSNSRGFYRGSIWYLDIICIHNLANDE.

This sequence belongs to the intron maturase 2 family. MatK subfamily.

Its subcellular location is the plastid. It is found in the chloroplast. In terms of biological role, usually encoded in the trnK tRNA gene intron. Probably assists in splicing its own and other chloroplast group II introns. The sequence is that of Maturase K from Silene otites (Spanish catchfly).